The primary structure comprises 70 residues: Large ribosomal subunit protein bL31 (70 aa).

Residues Cys16, Cys18, Cys37, and Cys40 each coordinate Zn(2+).

Belongs to the bacterial ribosomal protein bL31 family. Type A subfamily. In terms of assembly, part of the 50S ribosomal subunit. Zn(2+) serves as cofactor.

Binds the 23S rRNA. This Shewanella sp. (strain MR-4) protein is Large ribosomal subunit protein bL31.